Reading from the N-terminus, the 83-residue chain is Small ribosomal subunit protein uS17 (83 aa).

This sequence belongs to the universal ribosomal protein uS17 family. Part of the 30S ribosomal subunit.

Functionally, one of the primary rRNA binding proteins, it binds specifically to the 5'-end of 16S ribosomal RNA. This chain is Small ribosomal subunit protein uS17, found in Zymomonas mobilis subsp. mobilis (strain ATCC 31821 / ZM4 / CP4).